A 209-amino-acid chain; its full sequence is Large ribosomal subunit protein bL9 (209 aa).

The segment at 184–209 (SAASEDSDLVETPEDRATEEAEDEQP) is disordered.

This sequence belongs to the bacterial ribosomal protein bL9 family.

Functionally, binds to the 23S rRNA. This is Large ribosomal subunit protein bL9 from Dinoroseobacter shibae (strain DSM 16493 / NCIMB 14021 / DFL 12).